We begin with the raw amino-acid sequence, 1510 residues long: MSDVFELENEIELESDEVILENENVEEIVDAPIPFSMTTNNGIERGKFRSLTLINWNGFFARTFDLDELVTTLSGGNGAGKSTTMAGFVTALIPDLTLLHFRNTTEAGSTGGSRDKGLHGKLRPGVCYAVLDTINSRHQRILVGVRLQQIAGRDKKVDLKTFSIQGVELSQNPTALFTETVGEHQARVLNLNELKDKIENIGAQFKQYHSITDYHGMMFDLGIIPKRLRSASDRSKFYKLIEASLYGGISSAITRSLRDYLLPENLGVRKAFQDMESALRENRMTLEAIKVTQSDRDLFKHLITETTNYVASDYMRNANERRGNIEAALESRREWYKAKAEQNLSQHRLVDLSREVAELAESERTLEVDHQSAVDHLNLVLNALRHQEKITRYQEDIAELTERLEEQKMVVEDANDALEESQAQFEQTEIEIDAVRSQLADYQQALDAQQTRALQYQQAIAALEKAKTLCGLADLSVKNVEDYHAEFDAHAESLTETVLELEHKMSISEAAKSQFDKAYQLVCKIAGEMPRSTAWESAKELLREYPSQKLQAQQTPQLRTKLHELEQRYAQQQSAVKLLNDFNQRANLSLQTAEELEDYHAEQEALIEDISARLSEQVENRSTLRQKRENLTALYDENARKAPAWLTAQAALERLEQQSGERFEHSQDVMNFMQSQLVKERELTMQRDQLEQKRLHLDEQISRLSQPDGSEDPRLNMLAERFGGVLLSELYDDVTIEDAPYFSALYGPSRHAIVVRDLNAVREQLAQLEDCPDDLYLIEGDPTAFDDSVLSAQELELGVVVQVSDRELRYSRFPEIPLFGCAAREKRLEELQIERDEVAEQHAQIAFDVQKCQRLHEHFSQFVGLHLALAFQPNPEALMSEINRERNEIDRELNQFNSGEQQLRIQLDNAKERLQLLNKLIPQLNVLADEDLIDRIEECREQLDIAEQDEYFIRQHGVTLSQLEPIANSLQSDPENYEGLKNELTQAIERQKQVQQRVFALADVVQRKPHFGYEDAGQAETSELNEKLRQRLEQMQAQRDTQREQVRQKQSQFAEYNRVLIQLQSSYDSKYQLLNELIGEISDLGVRADDGAEERARIRRDELHQQLSTSRQRRSYVEKQLTLIESEADNLNRLIRKTERDYKTQRELVVAAKVSWCVVLRLSRNSDMEKRLNRRELAYLSADELRSMSDKALGALRTAVADNEYLRDSLRVSEDSRKPENKVRFFIAVYQHLRERIRQDIIKTDDPIDAIEQMEIELSRLTAELTGREKKLAISSESVANIMRKTIQREQNRIRMLNQGLQNIAFGQVKSVRLVVNIRDTHAMLLDALSGQQDEYQDLFNDNRITFSEAMAKLYQRINPHIDMGQRTAQTIGEELLDYRNYLELEVEVFRGADGWLRAESGALSTGEAIGTGMSILLMVVQSWEEESRRIRGKDIVPCRLLFLDEAARLDGKSISTLFELCERLDMQLLIAAPENISPEKGTTYKLVRKIAGNQEYVHVVGLRGFGATE.

75-82 provides a ligand contact to ATP; the sequence is GGNGAGKS. The stretch at 346–706 forms a coiled coil; the sequence is QHRLVDLSRE…LDEQISRLSQ (361 aa). A flexible hinge region spans residues 707–824; the sequence is PDGSEDPRLN…EIPLFGCAAR (118 aa). Coiled-coil stretches lie at residues 825 to 1154 and 1248 to 1304; these read EKRL…AAKV and IDAI…LQNI.

Belongs to the SMC family. MukB subfamily. As to quaternary structure, homodimerization via its hinge domain. Binds to DNA via its C-terminal region. Interacts, and probably forms a ternary complex, with MukE and MukF via its C-terminal region. The complex formation is stimulated by calcium or magnesium. Interacts with tubulin-related protein FtsZ.

Its subcellular location is the cytoplasm. It localises to the nucleoid. Plays a central role in chromosome condensation, segregation and cell cycle progression. Functions as a homodimer, which is essential for chromosome partition. Involved in negative DNA supercoiling in vivo, and by this means organize and compact chromosomes. May achieve or facilitate chromosome segregation by condensation DNA from both sides of a centrally located replisome during cell division. The sequence is that of Chromosome partition protein MukB from Haemophilus influenzae (strain ATCC 51907 / DSM 11121 / KW20 / Rd).